The chain runs to 528 residues: DNA damage-binding protein cmr1 (528 aa).

Disordered stretches follow at residues 32–98 (AQSS…QYEA) and 217–243 (DASQEKPTSAVKQEDDEEDAEDDDPDP). Over residues 52 to 62 (KPKKKPPPKKV) the composition is skewed to basic residues. A WD 1 repeat occupies 185 to 226 (LTPERIYTMTFHPSEAKPLIFAGDKMGNLGVLDASQEKPTSA). Over residues 230–242 (EDDEEDAEDDDPD) the composition is skewed to acidic residues. WD repeat units lie at residues 250–290 (PHTR…SVEK), 297–337 (SDDI…RSAV), 342–382 (LSEK…HDDP), 389–428 (VSRLSVSHAAFNSAGQIATSSYDDTLKIYDFGSKGIAAWE), 451–494 (GRWV…LAQL), and 497–528 (DGITAVPAVAVFHCSTNWIAGGTASGKICLWM).

It belongs to the WD repeat DDB2/WDR76 family.

In terms of biological role, DNA-binding protein that binds to both single- and double-stranded DNA. Binds preferentially to UV-damaged DNA. May be involved in DNA-metabolic processes. The sequence is that of DNA damage-binding protein cmr1 from Aspergillus fumigatus (strain CBS 144.89 / FGSC A1163 / CEA10) (Neosartorya fumigata).